The sequence spans 1358 residues: Xanthine dehydrogenase (1358 aa).

The 2Fe-2S ferredoxin-type domain occupies asparagine 18–leucine 107. Residues cysteine 56, cysteine 61, cysteine 64, cysteine 89, cysteine 129, cysteine 132, cysteine 164, and cysteine 166 each contribute to the [2Fe-2S] cluster site. In terms of domain architecture, FAD-binding PCMH-type spans phenylalanine 253 to proline 447. FAD contacts are provided by residues isoleucine 281–isoleucine 288, phenylalanine 366, serine 376–asparagine 380, aspartate 389, leucine 437, and lysine 455. The Mo-molybdopterin site is built by glutamine 805 and phenylalanine 836. The substrate site is built by glutamate 840 and arginine 918. Arginine 950 lines the Mo-molybdopterin pocket. Residues tyrosine 952 and threonine 1048 each contribute to the substrate site. Alanine 1117 provides a ligand contact to Mo-molybdopterin. The active-site Proton acceptor is glutamate 1302.

The protein belongs to the xanthine dehydrogenase family. In terms of assembly, homodimer. It depends on FAD as a cofactor. Mo-molybdopterin is required as a cofactor. Requires [2Fe-2S] cluster as cofactor.

It is found in the peroxisome. It carries out the reaction xanthine + NAD(+) + H2O = urate + NADH + H(+). The enzyme catalyses hypoxanthine + NAD(+) + H2O = xanthine + NADH + H(+). Functionally, key enzyme in purine degradation. Catalyzes the oxidation of hypoxanthine to xanthine. Catalyzes the oxidation of xanthine to uric acid. The chain is Xanthine dehydrogenase (xdh) from Dictyostelium discoideum (Social amoeba).